A 269-amino-acid polypeptide reads, in one-letter code: Protein TIFY 11B (269 aa).

The Tify domain maps to 100-135 (PESGNSQLTIFFGGKVMVFNEFPEDKAKEIMEVAKE). Residues 160–181 (PDLNEPTSSGNNEDQETGQQHQ) form a disordered region. Polar residues predominate over residues 164-181 (EPTSSGNNEDQETGQQHQ). Positions 186–210 (IARRASLHRFFAKRKDRAVARAPYQ) match the Jas motif. The short motif at 187–194 (ARRASLHR) is the Nuclear localization signal element. The disordered stretch occupies residues 209–269 (YQVNQHGSHL…QSSKNLELKL (61 aa)). Residues 250–269 (MPMEVDKKEGQSSKNLELKL) are compositionally biased toward basic and acidic residues.

Belongs to the TIFY/JAZ family. As to quaternary structure, homo- and heterodimer. Interacts with MYC2, AFPH2/NINJA, TIFY10A/JAZ1, TIFY10B/JAZ2, TIFY11A/JAZ5, TIFY5A/JAZ8, TIFY9/JAZ10 and TIFY3B/JAZ12. In terms of assembly, (Microbial infection) Interacts with the pathogenic Pseudomonas syringae HopZ1a protein. (Microbial infection) Acetylated by Pseudomonas syringae HopZ1a. Post-translationally, ubiquitinated. Targeted for degradation by the SCF(COI1) E3 ubiquitin ligase-proteasome pathway during jasmonate signaling.

It is found in the nucleus. Its subcellular location is the cell membrane. Functionally, repressor of jasmonate responses. This is Protein TIFY 11B from Arabidopsis thaliana (Mouse-ear cress).